The primary structure comprises 925 residues: Nuclear pore complex protein Nup107 (925 aa).

Residue M1 is modified to N-acetylmethionine. Residues S4, S10, S11, and S37 each carry the phosphoserine modification. Residues 20–66 (TRTARKQSAQKRVLLQASQDENFGNTTPRNQVIPRTPSSFRQPFTPT) form a disordered region. Polar residues-rich tracts occupy residues 35–49 (QASQ…TPRN) and 55–66 (TPSSFRQPFTPT). Phosphothreonine occurs at positions 46 and 55. 2 positions are modified to phosphoserine: S57 and S58. R60 bears the Asymmetric dimethylarginine; alternate mark. R60 carries the omega-N-methylarginine; alternate modification. Position 64 is a phosphothreonine (T64). Omega-N-methylarginine is present on R68. Phosphoserine is present on residues S69 and S86.

The protein belongs to the nucleoporin Nup84/Nup107 family. In terms of assembly, part of the nuclear pore complex (NPC). Forms part of the Nup160 subcomplex in the nuclear pore which is composed of NUP160, NUP133, NUP107 and Nup96; this complex plays a role in RNA export and in tethering Nup98 and NUP153 to the nucleus. Does not interact with TPR. Interacts with ZNF106. In terms of tissue distribution, ubiquitously expressed in fetal and adult tissues.

Its subcellular location is the nucleus membrane. It localises to the nucleus. The protein resides in the nuclear pore complex. The protein localises to the chromosome. It is found in the centromere. Its subcellular location is the kinetochore. Plays a role in the nuclear pore complex (NPC) assembly and/or maintenance. Required for the assembly of peripheral proteins into the NPC. May anchor NUP62 to the NPC. Involved in nephrogenesis. This chain is Nuclear pore complex protein Nup107 (NUP107), found in Homo sapiens (Human).